A 64-amino-acid chain; its full sequence is Alternative prion protein (64 aa).

The tract at residues 1 to 22 (MEHWGEPIPGTGQSWRQPLSTS) is disordered. A compositionally biased stretch (polar residues) spans 11–22 (TGQSWRQPLSTS). The helical transmembrane segment at 40–58 (WRWLGSAPWWWLGTATWWW) threads the bilayer.

The protein localises to the mitochondrion outer membrane. This is Alternative prion protein from Ovis aries (Sheep).